Reading from the N-terminus, the 240-residue chain is Protein OXIDATIVE STRESS 3 LIKE 4 (240 aa).

The segment at 1-128 is disordered; that stretch reads MELMAKPTFS…SKSFGNLGEI (128 aa). Positions 51 to 66 are enriched in polar residues; the sequence is WSGQTADYSSDSSSIG. Over residues 70 to 84 the composition is skewed to acidic residues; sequence DSEEDEEESENENDD. The short motif at 142-150 is the Nuclear localization signal element; that stretch reads NKRRRLQIC. Positions 163–207 are disordered; that stretch reads NPKSMPLLPVNEDEDDDDEDDDEEDLKSGFDENKSSSDEEGVKKV. Residues 173-187 are compositionally biased toward acidic residues; that stretch reads NEDEDDDDEDDDEED. Residues 188–205 show a composition bias toward basic and acidic residues; the sequence is LKSGFDENKSSSDEEGVK. A kinase-inducible domain (KID) region spans residues 202-229; it reads EGVKKVVVRKGSFKNRAYKSRSCFALSD. Serine 213 is subject to Phosphoserine.

As to quaternary structure, interacts with HDA19; Ser-213 is critical for this interaction.

It localises to the nucleus. In terms of biological role, transcription activator which may regulates gene expression through interaction with the histone deacetylase HDA19. Promotes slightly the tolerance to cadmium (Cd) and to oxidizing chemicals (e.g. diamide and tert-butyl hydroperoxide (t-BOOH)). The protein is Protein OXIDATIVE STRESS 3 LIKE 4 of Arabidopsis thaliana (Mouse-ear cress).